A 556-amino-acid polypeptide reads, in one-letter code: Phenylalanine--tRNA ligase beta subunit (556 aa).

The B5 domain occupies 278–353 (LTPKRFEVEL…IAYGYNNIEP (76 aa)). Mg(2+)-binding residues include Asp-331, Asp-337, Glu-340, and Asp-341.

It belongs to the phenylalanyl-tRNA synthetase beta subunit family. Type 2 subfamily. Tetramer of two alpha and two beta subunits. Mg(2+) serves as cofactor.

Its subcellular location is the cytoplasm. The enzyme catalyses tRNA(Phe) + L-phenylalanine + ATP = L-phenylalanyl-tRNA(Phe) + AMP + diphosphate + H(+). The sequence is that of Phenylalanine--tRNA ligase beta subunit from Pyrococcus abyssi (strain GE5 / Orsay).